Consider the following 301-residue polypeptide: Nucleotide-binding protein Noca_2527 (301 aa).

26-33 provides a ligand contact to ATP; sequence GMTGAGRS. 77-80 lines the GTP pocket; sequence DVRS.

It belongs to the RapZ-like family.

Displays ATPase and GTPase activities. In Nocardioides sp. (strain ATCC BAA-499 / JS614), this protein is Nucleotide-binding protein Noca_2527.